The following is a 141-amino-acid chain: Sigma factor binding protein 2, chloroplastic (141 aa).

A compositionally biased stretch (polar residues) spans 1 to 20 (MDQSSSTLLINQRKSSSSPT). The disordered stretch occupies residues 1 to 36 (MDQSSSTLLINQRKSSSSPTRIPPKQKRKSTTTHKP). The N-terminal 38 residues, 1-38 (MDQSSSTLLINQRKSSSSPTRIPPKQKRKSTTTHKPIK), are a transit peptide targeting the chloroplast. A Bipartite nuclear localization signal motif is present at residues 13-29 (RKSSSSPTRIPPKQKRK). Residues 24 to 36 (PKQKRKSTTTHKP) show a composition bias toward basic residues. Residues 55 to 64 (FRELVQELTG) carry the VQ motif.

As to quaternary structure, interacts with sigma factors in chloroplast. Interacts with WRKY33 in the nucleus.

It localises to the plastid. It is found in the chloroplast. The protein resides in the nucleus. Its function is as follows. Functions as activator of WRKY33 in plant defense against necrotrophic pathogens by stimulating the DNA-binding activity of WRKY33. In Arabidopsis thaliana (Mouse-ear cress), this protein is Sigma factor binding protein 2, chloroplastic (SIB2).